Consider the following 700-residue polypeptide: Leucine zipper putative tumor suppressor 3 (700 aa).

4 disordered regions span residues 1-20 (MAPA…PAPH), 40-121 (RADP…SEDK), 133-188 (LRGS…SEPL), and 202-344 (FHSM…PPSP). Basic and acidic residues predominate over residues 109-121 (NRERPGRYPSEDK). Positions 203-216 (HSMQNLCPPQTNGT) are enriched in polar residues. 2 stretches are compositionally biased toward low complexity: residues 248–265 (DSGR…SSYS) and 301–321 (GTSD…MGRS). A compositionally biased stretch (gly residues) spans 322-333 (GHLGSGEGGNGG). Phosphoserine is present on residues Ser343 and Ser345. 2 coiled-coil regions span residues 345-523 (SALI…SLRD) and 597-666 (TRAL…RLRE). The disordered stretch occupies residues 662–700 (RRLRERGAAGGSSTPTPQHGEEKKAWTPSRLERIESTEI). Positions 680–700 (HGEEKKAWTPSRLERIESTEI) are enriched in basic and acidic residues.

The protein belongs to the LZTS3 family. Interacts (via C-terminus) with SHANK3 (via PDZ domain). Interacts (via coiled coil) with SIPA1L1. Can form homooligomers.

Its subcellular location is the synapse. It is found in the postsynaptic density. The protein localises to the cell projection. It localises to the dendritic spine. The protein resides in the dendrite. Its subcellular location is the cytoplasm. It is found in the cytoskeleton. In terms of biological role, may be involved in promoting the maturation of dendritic spines, probably via regulating SIPA1L1 levels at the postsynaptic density of synapses. This is Leucine zipper putative tumor suppressor 3 from Mus musculus (Mouse).